We begin with the raw amino-acid sequence, 289 residues long: Bis(5'-nucleosyl)-tetraphosphatase, symmetrical (289 aa).

This sequence belongs to the Ap4A hydrolase family.

The enzyme catalyses P(1),P(4)-bis(5'-adenosyl) tetraphosphate + H2O = 2 ADP + 2 H(+). Hydrolyzes diadenosine 5',5'''-P1,P4-tetraphosphate to yield ADP. In Yersinia pseudotuberculosis serotype O:3 (strain YPIII), this protein is Bis(5'-nucleosyl)-tetraphosphatase, symmetrical.